The following is a 101-amino-acid chain: Urease subunit beta 1 (101 aa).

It belongs to the urease beta subunit family. Heterotrimer of UreA (gamma), UreB (beta) and UreC (alpha) subunits. Three heterotrimers associate to form the active enzyme.

Its subcellular location is the cytoplasm. It carries out the reaction urea + 2 H2O + H(+) = hydrogencarbonate + 2 NH4(+). Its pathway is nitrogen metabolism; urea degradation; CO(2) and NH(3) from urea (urease route): step 1/1. Functionally, disruption of the ure1 gene cluster suggests that it protects brucellae during their passage through the stomach. The major route of infection in human brucellosis is oral. This chain is Urease subunit beta 1, found in Brucella abortus (strain 2308).